The primary structure comprises 397 residues: Subtilisin-like protease 3 (397 aa).

An N-terminal signal peptide occupies residues 1-19; sequence MGCIKVISVFLAAVAAVDA. Residues 20–116 constitute a propeptide that is removed on maturation; it reads RAFFHNRGGN…VEHDRVVKLA (97 aa). Residues 35–116 form the Inhibitor I9 domain; sequence SYIVVMKDGV…VEHDRVVKLA (82 aa). The Peptidase S8 domain occupies 126–397; the sequence is TWGLGRVSHK…NKLLYNGSGR (272 aa). Active-site charge relay system residues include Asp158 and His189. Residue Asn250 is glycosylated (N-linked (GlcNAc...) asparagine). Catalysis depends on Ser344, which acts as the Charge relay system. Residue Asn393 is glycosylated (N-linked (GlcNAc...) asparagine).

It belongs to the peptidase S8 family.

Its subcellular location is the secreted. Secreted subtilisin-like serine protease with keratinolytic activity that contributes to pathogenicity. This chain is Subtilisin-like protease 3 (SUB3), found in Arthroderma otae (strain ATCC MYA-4605 / CBS 113480) (Microsporum canis).